Consider the following 410-residue polypeptide: Argininosuccinate synthase (410 aa).

Residues 14–22 (AYSGGLDTS) and Ala-41 contribute to the ATP site. Residues Tyr-92 and Ser-97 each contribute to the L-citrulline site. Gly-122 is an ATP binding site. L-aspartate contacts are provided by Thr-124, Asn-128, and Asp-129. Residue Asn-128 coordinates L-citrulline. Residues Arg-132, Ser-183, Ser-192, Glu-268, and Tyr-280 each coordinate L-citrulline.

This sequence belongs to the argininosuccinate synthase family. Type 1 subfamily. As to quaternary structure, homotetramer.

Its subcellular location is the cytoplasm. The catalysed reaction is L-citrulline + L-aspartate + ATP = 2-(N(omega)-L-arginino)succinate + AMP + diphosphate + H(+). It functions in the pathway amino-acid biosynthesis; L-arginine biosynthesis; L-arginine from L-ornithine and carbamoyl phosphate: step 2/3. The chain is Argininosuccinate synthase from Parvibaculum lavamentivorans (strain DS-1 / DSM 13023 / NCIMB 13966).